We begin with the raw amino-acid sequence, 670 residues long: UvrABC system protein B (670 aa).

Positions 25-412 constitute a Helicase ATP-binding domain; the sequence is EGLEAGLSHQ…AGRVIEQVVR (388 aa). Residue 38–45 coordinates ATP; it reads GVTGSGKT. The short motif at 91 to 114 is the Beta-hairpin element; the sequence is YYDYYQPEAYVPSSDTYIEKDSSI. Positions 429-582 constitute a Helicase C-terminal domain; it reads QVDDLLSQIR…QIAFNEAHGI (154 aa). Positions 631 to 666 constitute a UVR domain; it reads SKRIRQLEEKMYQLARDLEFEAAAQLRDEIQTLRER.

The protein belongs to the UvrB family. Forms a heterotetramer with UvrA during the search for lesions. Interacts with UvrC in an incision complex.

The protein resides in the cytoplasm. The UvrABC repair system catalyzes the recognition and processing of DNA lesions. A damage recognition complex composed of 2 UvrA and 2 UvrB subunits scans DNA for abnormalities. Upon binding of the UvrA(2)B(2) complex to a putative damaged site, the DNA wraps around one UvrB monomer. DNA wrap is dependent on ATP binding by UvrB and probably causes local melting of the DNA helix, facilitating insertion of UvrB beta-hairpin between the DNA strands. Then UvrB probes one DNA strand for the presence of a lesion. If a lesion is found the UvrA subunits dissociate and the UvrB-DNA preincision complex is formed. This complex is subsequently bound by UvrC and the second UvrB is released. If no lesion is found, the DNA wraps around the other UvrB subunit that will check the other stand for damage. This Pseudomonas aeruginosa (strain ATCC 15692 / DSM 22644 / CIP 104116 / JCM 14847 / LMG 12228 / 1C / PRS 101 / PAO1) protein is UvrABC system protein B.